The primary structure comprises 417 residues: NADH-quinone oxidoreductase subunit D (417 aa).

It belongs to the complex I 49 kDa subunit family. In terms of assembly, NDH-1 is composed of 14 different subunits. Subunits NuoB, C, D, E, F, and G constitute the peripheral sector of the complex.

The protein localises to the cell inner membrane. It carries out the reaction a quinone + NADH + 5 H(+)(in) = a quinol + NAD(+) + 4 H(+)(out). In terms of biological role, NDH-1 shuttles electrons from NADH, via FMN and iron-sulfur (Fe-S) centers, to quinones in the respiratory chain. The immediate electron acceptor for the enzyme in this species is believed to be ubiquinone. Couples the redox reaction to proton translocation (for every two electrons transferred, four hydrogen ions are translocated across the cytoplasmic membrane), and thus conserves the redox energy in a proton gradient. This Herminiimonas arsenicoxydans protein is NADH-quinone oxidoreductase subunit D.